Reading from the N-terminus, the 569-residue chain is Proline--tRNA ligase (569 aa).

This sequence belongs to the class-II aminoacyl-tRNA synthetase family. ProS type 1 subfamily. Homodimer.

The protein localises to the cytoplasm. It catalyses the reaction tRNA(Pro) + L-proline + ATP = L-prolyl-tRNA(Pro) + AMP + diphosphate. In terms of biological role, catalyzes the attachment of proline to tRNA(Pro) in a two-step reaction: proline is first activated by ATP to form Pro-AMP and then transferred to the acceptor end of tRNA(Pro). As ProRS can inadvertently accommodate and process non-cognate amino acids such as alanine and cysteine, to avoid such errors it has two additional distinct editing activities against alanine. One activity is designated as 'pretransfer' editing and involves the tRNA(Pro)-independent hydrolysis of activated Ala-AMP. The other activity is designated 'posttransfer' editing and involves deacylation of mischarged Ala-tRNA(Pro). The misacylated Cys-tRNA(Pro) is not edited by ProRS. The polypeptide is Proline--tRNA ligase (Legionella pneumophila (strain Lens)).